The chain runs to 364 residues: GDSL esterase/lipase 7 (364 aa).

The first 19 residues, 1 to 19, serve as a signal peptide directing secretion; the sequence is MKSLLICLVLLELVWLGNG. The active-site Nucleophile is serine 37. Residues asparagine 236, asparagine 237, and asparagine 264 are each glycosylated (N-linked (GlcNAc...) asparagine). Catalysis depends on residues aspartate 329 and histidine 332. Residue asparagine 351 is glycosylated (N-linked (GlcNAc...) asparagine).

The protein belongs to the 'GDSL' lipolytic enzyme family.

The protein resides in the secreted. This Arabidopsis thaliana (Mouse-ear cress) protein is GDSL esterase/lipase 7 (GLIP7).